The chain runs to 362 residues: UDP-N-acetylglucosamine--N-acetylmuramyl-(pentapeptide) pyrophosphoryl-undecaprenol N-acetylglucosamine transferase (362 aa).

UDP-N-acetyl-alpha-D-glucosamine is bound by residues 15–17, asparagine 127, arginine 165, serine 191, isoleucine 247, 266–271, and glutamine 292; these read TGG and ALTVSE.

This sequence belongs to the glycosyltransferase 28 family. MurG subfamily.

The protein resides in the cell inner membrane. The catalysed reaction is di-trans,octa-cis-undecaprenyl diphospho-N-acetyl-alpha-D-muramoyl-L-alanyl-D-glutamyl-meso-2,6-diaminopimeloyl-D-alanyl-D-alanine + UDP-N-acetyl-alpha-D-glucosamine = di-trans,octa-cis-undecaprenyl diphospho-[N-acetyl-alpha-D-glucosaminyl-(1-&gt;4)]-N-acetyl-alpha-D-muramoyl-L-alanyl-D-glutamyl-meso-2,6-diaminopimeloyl-D-alanyl-D-alanine + UDP + H(+). It participates in cell wall biogenesis; peptidoglycan biosynthesis. In terms of biological role, cell wall formation. Catalyzes the transfer of a GlcNAc subunit on undecaprenyl-pyrophosphoryl-MurNAc-pentapeptide (lipid intermediate I) to form undecaprenyl-pyrophosphoryl-MurNAc-(pentapeptide)GlcNAc (lipid intermediate II). This chain is UDP-N-acetylglucosamine--N-acetylmuramyl-(pentapeptide) pyrophosphoryl-undecaprenol N-acetylglucosamine transferase, found in Shewanella baltica (strain OS223).